The primary structure comprises 154 residues: MKTFSAKPAEVQKKWVVIDAKGLVVGRLATLVAMRLRGKHLPIYTPHVDCGDNVIIVNAKHAVFTGRKREQKTYYKHTGFVGHVKERTARQILEGRFPERVLEKAVERMIPRGPLGRVQMGNLRVYGGPDHPHEAQNPEKIDIAKLNRKNTRAA.

It belongs to the universal ribosomal protein uL13 family. Part of the 50S ribosomal subunit.

Its function is as follows. This protein is one of the early assembly proteins of the 50S ribosomal subunit, although it is not seen to bind rRNA by itself. It is important during the early stages of 50S assembly. The sequence is that of Large ribosomal subunit protein uL13 from Bradyrhizobium sp. (strain BTAi1 / ATCC BAA-1182).